A 626-amino-acid chain; its full sequence is Colicin-Ib (626 aa).

Positions 276 to 286 (QQLTQQKNTPD) are enriched in polar residues. Positions 276–308 (QQLTQQKNTPDGKTIVSPEKFPGRSSTNHSIVV) are disordered. A helical transmembrane segment spans residues 588 to 612 (FSVMLGTPVGILGFAIIMAAVSALV).

Belongs to the channel forming colicin family.

It localises to the host membrane. In terms of biological role, this colicin is a channel-forming colicin. This class of transmembrane toxins depolarize the cytoplasmic membrane, leading to dissipation of cellular energy. Its function is as follows. Colicins are polypeptide toxins produced by and active against E.coli and closely related bacteria. In Escherichia coli, this protein is Colicin-Ib (cib).